Consider the following 368-residue polypeptide: Terpene cyclase penA (368 aa).

6 helical membrane passes run 10 to 30 (IILASVAIYTKYYLSFQNGFI), 81 to 101 (LSLYAIAFAGSMIPMWLILLM), 118 to 138 (LTGLLVQGIGPGVMMCVLLAM), 192 to 212 (LFIASWQGWPLYIALAVGIAH), 233 to 253 (FALACSIISHVGLLLISFLSI), and 334 to 354 (LATMSLAFGPCSVALALYWTA).

It belongs to the membrane-bound ascI terpene cyclase family.

Its subcellular location is the membrane. It functions in the pathway secondary metabolite biosynthesis. Its function is as follows. Part of the gene cluster that mediates the biosynthesis of the indole diterpenes penitrems. The geranylgeranyl diphosphate (GGPP) synthase penG catalyzes the first step in penitrem biosynthesis via conversion of farnesyl pyrophosphate and isopentyl pyrophosphate into geranylgeranyl pyrophosphate (GGPP). Condensation of indole-3-glycerol phosphate with GGPP by the prenyl transferase penC then forms 3-geranylgeranylindole (3-GGI). Epoxidation by the FAD-dependent monooxygenase penM leads to a epoxidized-GGI that is substrate of the terpene cyclase penB for cyclization to yield paspaline. Paspaline is subsequently converted to 13-desoxypaxilline by the cytochrome P450 monooxygenase penP, the latter being then converted to paxilline by the cytochrome P450 monooxygenase penQ. Paxilline is converted to beta-paxitriol via C-10 ketoreduction by the short-chain dehydrogenase PC-15 which can be monoprenylated at the C-20 by the indole diterpene prenyltransferase penD. A two-step elimination (acetylation and elimination) process performed by the O-acetyltransferase PC-16 and the P.simplicissimum ptmI-ortholog not yet identified in P.crustosum, leads to the production of the prenylated form of penijanthine. The FAD-linked oxidoreductase ptmO then converts the prenylated form of penijanthine into PC-M5 which is in turn transformed into PC-M4 by the aromatic dimethylallyltransferase PC-22. A series of oxidation steps involving 4 cytochrome P450 monooxygenases (PC-21, PC-05, PC-23, PC-20) and a FAD-dependent monooxygenase (PC-14) are required for the transformation of PC-M4 to penitrems A and E. Synthesis of these final products is proposed to proceed via penitrems D and C (PC-21, PC-05, PC-14) and penitrems B and F (PC-21, PC-05, PC-14, PC-23). The protein is Terpene cyclase penA of Penicillium crustosum (Blue mold fungus).